Consider the following 292-residue polypeptide: NAD kinase (292 aa).

The Proton acceptor role is filled by D73. NAD(+)-binding positions include 73-74 (DG), 147-148 (NE), H158, R175, D177, 188-193 (TAYSLS), and Q247.

This sequence belongs to the NAD kinase family. A divalent metal cation serves as cofactor.

It localises to the cytoplasm. The enzyme catalyses NAD(+) + ATP = ADP + NADP(+) + H(+). Involved in the regulation of the intracellular balance of NAD and NADP, and is a key enzyme in the biosynthesis of NADP. Catalyzes specifically the phosphorylation on 2'-hydroxyl of the adenosine moiety of NAD to yield NADP. In Shigella dysenteriae serotype 1 (strain Sd197), this protein is NAD kinase.